We begin with the raw amino-acid sequence, 426 residues long: Na(+)/H(+) antiporter 1 (426 aa).

The next 12 membrane-spanning stretches (helical) occupy residues 1-21, 29-49, 57-77, 95-115, 120-140, 158-178, 184-204, 208-228, 236-256, 286-306, 309-329, and 382-402; these read MELMMAIGYLGLALVLGSLVA, IPDIPLLLLLGLIIGPFLQII, IFEYAGPIGLIFILLGGAFTM, ITFLITLLISGFIFNMVLNLP, VGYLFGAITAATDPATLIPVF, IFNDPLGIVSTSVILGLFGLF, LIDLITLAGGAIVVGLLLAKI, IIIHCDFHEYVAPLVLGGAML, LLPSICGYGFSGYMAVAIMGL, VFIFVFLGACIKLSMLENYFI, LLVALGSIFLARPLGVFLGLI, and IAGTIIIGTFMTILLSVILEA.

The protein belongs to the monovalent cation:proton antiporter 1 (CPA1) transporter (TC 2.A.36) family.

The protein localises to the cell membrane. Its function is as follows. This is a Na(+)/H(+) antiporter. Can also transport lithium. This Methanocaldococcus jannaschii (strain ATCC 43067 / DSM 2661 / JAL-1 / JCM 10045 / NBRC 100440) (Methanococcus jannaschii) protein is Na(+)/H(+) antiporter 1.